The chain runs to 263 residues: 4-hydroxy-2-oxo-heptane-1,7-dioate aldolase (263 aa).

The active-site Proton acceptor is H45. Position 147 (Q147) interacts with substrate. E149 is an a divalent metal cation binding site. 2 residues coordinate substrate: A174 and D175. D175 serves as a coordination point for a divalent metal cation.

Belongs to the HpcH/HpaI aldolase family. Homohexamer; trimer of dimers. The cofactor is a divalent metal cation.

It catalyses the reaction 4-hydroxy-2-oxoheptanedioate = succinate semialdehyde + pyruvate. It functions in the pathway aromatic compound metabolism; 4-hydroxyphenylacetate degradation; pyruvate and succinate semialdehyde from 4-hydroxyphenylacetate: step 7/7. In terms of biological role, catalyzes the reversible retro-aldol cleavage of 4-hydroxy-2-ketoheptane-1,7-dioate (HKHD) to pyruvate and succinic semialdehyde. This Salmonella newport (strain SL254) protein is 4-hydroxy-2-oxo-heptane-1,7-dioate aldolase.